The sequence spans 557 residues: Dihydroxy-acid dehydratase (557 aa).

Asp78 is a binding site for Mg(2+). Position 119 (Cys119) interacts with [2Fe-2S] cluster. The Mg(2+) site is built by Asp120 and Lys121. The residue at position 121 (Lys121) is an N6-carboxylysine. Cys192 serves as a coordination point for [2Fe-2S] cluster. Glu446 contacts Mg(2+). Ser472 acts as the Proton acceptor in catalysis.

It belongs to the IlvD/Edd family. In terms of assembly, homodimer. Requires [2Fe-2S] cluster as cofactor. The cofactor is Mg(2+).

The enzyme catalyses (2R)-2,3-dihydroxy-3-methylbutanoate = 3-methyl-2-oxobutanoate + H2O. The catalysed reaction is (2R,3R)-2,3-dihydroxy-3-methylpentanoate = (S)-3-methyl-2-oxopentanoate + H2O. Its pathway is amino-acid biosynthesis; L-isoleucine biosynthesis; L-isoleucine from 2-oxobutanoate: step 3/4. It functions in the pathway amino-acid biosynthesis; L-valine biosynthesis; L-valine from pyruvate: step 3/4. Its function is as follows. Functions in the biosynthesis of branched-chain amino acids. Catalyzes the dehydration of (2R,3R)-2,3-dihydroxy-3-methylpentanoate (2,3-dihydroxy-3-methylvalerate) into 2-oxo-3-methylpentanoate (2-oxo-3-methylvalerate) and of (2R)-2,3-dihydroxy-3-methylbutanoate (2,3-dihydroxyisovalerate) into 2-oxo-3-methylbutanoate (2-oxoisovalerate), the penultimate precursor to L-isoleucine and L-valine, respectively. The protein is Dihydroxy-acid dehydratase of Campylobacter curvus (strain 525.92).